A 108-amino-acid polypeptide reads, in one-letter code: Putative pterin-4-alpha-carbinolamine dehydratase (108 aa).

This sequence belongs to the pterin-4-alpha-carbinolamine dehydratase family.

It carries out the reaction (4aS,6R)-4a-hydroxy-L-erythro-5,6,7,8-tetrahydrobiopterin = (6R)-L-erythro-6,7-dihydrobiopterin + H2O. The protein is Putative pterin-4-alpha-carbinolamine dehydratase of Chromobacterium violaceum (strain ATCC 12472 / DSM 30191 / JCM 1249 / CCUG 213 / NBRC 12614 / NCIMB 9131 / NCTC 9757 / MK).